We begin with the raw amino-acid sequence, 371 residues long: MNNYSNLALSKSKGRIFKEANSLYRTPFQRDRDRIIHSASFRRLKHKTQVFVNTEGDHFRTRITHSIEVAQIARSIAKHLGLNDDLAETLSLAHDLGHTPFGHAGEDALNECMVNFGGFDHNLQTLRIVMFLEHKYLKFKGLNLTLETLDGLLKHNGAIDDLSTVNRLIGLKSFKNKINFNNSGSLEAQISAISDDIAYNNHDIQDGIRAKMFNLNDLIEINFFKDIYKSHKNNIKNNNKDILIYQIIRDSIDLMVRDLIKNTKNNLKNNKVKSLKDVYNLDDPIVCFSSKFLKIEKEVRFFLRSKMYNNKKVLLKNNHGKKIINKLFYKIKNKPKKFLNDDQLKNDTNRAIADFISGMTDRYAINLNKGI.

Positions 62-200 (RITHSIEVAQ…SAISDDIAYN (139 aa)) constitute an HD domain.

This sequence belongs to the dGTPase family. Type 2 subfamily.

In Pelagibacter ubique (strain HTCC1062), this protein is Deoxyguanosinetriphosphate triphosphohydrolase-like protein.